Reading from the N-terminus, the 448-residue chain is Phosphoglucosamine mutase (448 aa).

Ser104 functions as the Phosphoserine intermediate in the catalytic mechanism. Residues Ser104, Asp245, Asp247, and Asp249 each contribute to the Mg(2+) site. At Ser104 the chain carries Phosphoserine.

The protein belongs to the phosphohexose mutase family. Mg(2+) serves as cofactor. Post-translationally, activated by phosphorylation.

It carries out the reaction alpha-D-glucosamine 1-phosphate = D-glucosamine 6-phosphate. Functionally, catalyzes the conversion of glucosamine-6-phosphate to glucosamine-1-phosphate. This Caulobacter vibrioides (strain ATCC 19089 / CIP 103742 / CB 15) (Caulobacter crescentus) protein is Phosphoglucosamine mutase.